Consider the following 277-residue polypeptide: MGIRVYKPTTNGRRNMTSLDFAEFTTSTPEKSLLVSLKSKAGRNNNGRITVRHQGGGHKRHYRLIDFKRNKDAVEAVVKTIEYDPNRSANIALVHYTDGVKAYIIAPKGLEVGQRIVSGPEADIKVGNALPLANIPVGTLVHNIELKPGRGGELVRAAGASAQVLGQEGKYTLVRLQSGEVRMILGTCRATVGVVGNEQHGLVNLGKAGRSRWKGIRPTVRGSVMNPNDHPHGGGEGKAPVGRKAPSTPWGKPALGLKTRNKKAKSDKLIVRRRNEK.

A disordered region spans residues 219–277 (TVRGSVMNPNDHPHGGGEGKAPVGRKAPSTPWGKPALGLKTRNKKAKSDKLIVRRRNEK). Positions 264–277 (AKSDKLIVRRRNEK) are enriched in basic and acidic residues.

The protein belongs to the universal ribosomal protein uL2 family. As to quaternary structure, part of the 50S ribosomal subunit. Forms a bridge to the 30S subunit in the 70S ribosome.

Functionally, one of the primary rRNA binding proteins. Required for association of the 30S and 50S subunits to form the 70S ribosome, for tRNA binding and peptide bond formation. It has been suggested to have peptidyltransferase activity; this is somewhat controversial. Makes several contacts with the 16S rRNA in the 70S ribosome. In Streptococcus sanguinis (strain SK36), this protein is Large ribosomal subunit protein uL2.